We begin with the raw amino-acid sequence, 220 residues long: Fibroblast growth factor 3 (220 aa).

The signal sequence occupies residues 1–19 (MLVIWLLLLALLPEPRVPA). The tract at residues 19-40 (AATASPRAPRDAGGRGGVYEHL) is disordered. A glycan (N-linked (GlcNAc...) asparagine) is linked at Asn66.

Belongs to the heparin-binding growth factors family.

Its subcellular location is the secreted. Functionally, plays an important role in the regulation of embryonic development, cell proliferation, and cell differentiation. The protein is Fibroblast growth factor 3 (FGF3) of Gallus gallus (Chicken).